Consider the following 204-residue polypeptide: TPR repeat-containing protein RHE_CH03534.1 (204 aa).

Positions 1 to 29 (MSAMRLFALTSAMLPLAFILSTSPFPATA) are cleaved as a signal peptide. 3 TPR repeats span residues 84 to 117 (INLL…KPDY), 118 to 151 (AESW…EPRH), and 153 to 185 (GALS…YPAD).

This Rhizobium etli (strain ATCC 51251 / DSM 11541 / JCM 21823 / NBRC 15573 / CFN 42) protein is TPR repeat-containing protein RHE_CH03534.1.